The chain runs to 107 residues: Nucleoid-associated protein Rru_A3472 (107 aa).

This sequence belongs to the YbaB/EbfC family. As to quaternary structure, homodimer.

It is found in the cytoplasm. Its subcellular location is the nucleoid. In terms of biological role, binds to DNA and alters its conformation. May be involved in regulation of gene expression, nucleoid organization and DNA protection. In Rhodospirillum rubrum (strain ATCC 11170 / ATH 1.1.1 / DSM 467 / LMG 4362 / NCIMB 8255 / S1), this protein is Nucleoid-associated protein Rru_A3472.